Consider the following 379-residue polypeptide: Cytochrome b (379 aa).

4 helical membrane-spanning segments follow: residues 34-54 (YGSL…MLAM), 78-100 (WMIR…VHIG), 113-133 (TWNI…LGYV), and 179-199 (FFSL…IHLL). Heme b contacts are provided by H84 and H98. Positions 183 and 197 each coordinate heme b. H202 is a binding site for a ubiquinone. A run of 4 helical transmembrane segments spans residues 225–245 (FSIK…FLVL), 289–309 (LGGV…PIFS), 320–340 (WSGM…WIGA), and 345–365 (APYI…FFWM).

The protein belongs to the cytochrome b family. As to quaternary structure, the main subunits of complex b-c1 are: cytochrome b, cytochrome c1 and the Rieske protein. The cofactor is heme b.

The protein localises to the mitochondrion inner membrane. In terms of biological role, component of the ubiquinol-cytochrome c reductase complex (complex III or cytochrome b-c1 complex) that is part of the mitochondrial respiratory chain. The b-c1 complex mediates electron transfer from ubiquinol to cytochrome c. Contributes to the generation of a proton gradient across the mitochondrial membrane that is then used for ATP synthesis. This Epiperipatus biolleyi (Velvet worm) protein is Cytochrome b (mt:Cyt-b).